The chain runs to 446 residues: N-succinylarginine dihydrolase (446 aa).

Substrate contacts are provided by residues 19–28 (AGLSFGNVAS), asparagine 110, and 137–138 (HR). Glutamate 174 is an active-site residue. Arginine 213 is a substrate binding site. Residue histidine 249 is part of the active site. 2 residues coordinate substrate: aspartate 251 and asparagine 364. Cysteine 370 functions as the Nucleophile in the catalytic mechanism.

The protein belongs to the succinylarginine dihydrolase family. In terms of assembly, homodimer.

The catalysed reaction is N(2)-succinyl-L-arginine + 2 H2O + 2 H(+) = N(2)-succinyl-L-ornithine + 2 NH4(+) + CO2. Its pathway is amino-acid degradation; L-arginine degradation via AST pathway; L-glutamate and succinate from L-arginine: step 2/5. Its function is as follows. Catalyzes the hydrolysis of N(2)-succinylarginine into N(2)-succinylornithine, ammonia and CO(2). The sequence is that of N-succinylarginine dihydrolase from Paraburkholderia xenovorans (strain LB400).